The chain runs to 332 residues: RNA polymerase sigma-B factor (332 aa).

A Polymerase core binding motif is present at residues 125 to 138; it reads DLIQEGALGLERGV. The H-T-H motif DNA-binding region spans 294-313; the sequence is LVQISQRMGISRERVRQVEK.

This sequence belongs to the sigma-70 factor family.

Sigma factors are initiation factors that promote the attachment of RNA polymerase to specific initiation sites and are then released. The polypeptide is RNA polymerase sigma-B factor (sigB) (Nostoc sp. (strain PCC 7120 / SAG 25.82 / UTEX 2576)).